The chain runs to 348 residues: Rhodopsin (348 aa).

The Extracellular portion of the chain corresponds to 1-33 (TEGPFFYIPMVNTSGVVRSPYEYPQYYLVNPAA). Asn-12 is a glycosylation site (N-linked (GlcNAc...) asparagine). A helical transmembrane segment spans residues 34–58 (YAILGAYMFFLIIIGFPVNFMTLYV). Topologically, residues 59–70 (TLEHKKLRTPLN) are cytoplasmic. A helical membrane pass occupies residues 71 to 93 (YILLNLAVADLFMVIGGFTTTMY). At 94-107 (SSMHGYFVLGRLGC) the chain is on the extracellular side. Cys-107 and Cys-184 are disulfide-bonded. A helical membrane pass occupies residues 108-130 (NMEGFSATLGGMISLWSLAVLAI). The short motif at 131 to 133 (ERW) is the 'Ionic lock' involved in activated form stabilization element. Residues 131–149 (ERWVVVCKPISNFRFGENH) are Cytoplasmic-facing. A helical membrane pass occupies residues 150-170 (AIMGVSLTWFMALACTVPPLV). Over 171–199 (GWSRYIPEGMQCSCGIDYYTRAEGFNNES) the chain is Extracellular. Asn-197 is a glycosylation site (N-linked (GlcNAc...) asparagine). The chain crosses the membrane as a helical span at residues 200–221 (FVLYMFFCHFLVPLVIIFFCYG). The Cytoplasmic segment spans residues 222–249 (RLLCAVKEAAAAQQESETTQRAEREVTR). The chain crosses the membrane as a helical span at residues 250-271 (MVIIMVIGFLVCWLPYASVAWF). Over 272–283 (IFTHQGSEFGPL) the chain is Extracellular. The chain crosses the membrane as a helical span at residues 284–305 (FMTIPAFFAKSSSIYNPMIYIC). Lys-293 carries the post-translational modification N6-(retinylidene)lysine. Topologically, residues 306-348 (MNKQFRNCMITTLFCGKNPFEGEEEGASSTKTEASSASSVSPA) are cytoplasmic. Cys-320 carries the S-palmitoyl cysteine lipid modification. The disordered stretch occupies residues 327–348 (GEEEGASSTKTEASSASSVSPA). Residues 332 to 348 (ASSTKTEASSASSVSPA) are compositionally biased toward low complexity.

Belongs to the G-protein coupled receptor 1 family. Opsin subfamily. Post-translationally, phosphorylated on some or all of the serine and threonine residues present in the C-terminal region. Contains one covalently linked retinal chromophore.

It localises to the membrane. The protein localises to the cell projection. The protein resides in the cilium. Its subcellular location is the photoreceptor outer segment. Its function is as follows. Photoreceptor required for image-forming vision at low light intensity. While most salt water fish species use retinal as chromophore, most freshwater fish use 3-dehydroretinal, or a mixture of retinal and 3-dehydroretinal. Light-induced isomerization of 11-cis to all-trans retinal triggers a conformational change that activates signaling via G-proteins. Subsequent receptor phosphorylation mediates displacement of the bound G-protein alpha subunit by arrestin and terminates signaling. This Sargocentron punctatissimum (Speckled squirrelfish) protein is Rhodopsin (rho).